Consider the following 122-residue polypeptide: LYR motif-containing protein 1 (122 aa).

It belongs to the complex I LYR family. In terms of tissue distribution, high levels in adipose tissue.

It localises to the nucleus. Functionally, may promote cell proliferation and inhibition of apoptosis of preadipocytes. The polypeptide is LYR motif-containing protein 1 (LYRM1) (Homo sapiens (Human)).